Consider the following 1021-residue polypeptide: Probable LRR receptor-like serine/threonine-protein kinase RFK1 (1021 aa).

Positions 1-39 (MISLYQILAEKKKKKKNDLNIFAFSVFAIICFKFYSVNA) are cleaved as a signal peptide. Residues 41–625 (KLPQQEVDAL…PKTGMSPGAY (585 aa)) are Extracellular-facing. An N-linked (GlcNAc...) asparagine glycan is attached at asparagine 96. 2 LRR repeats span residues 99 to 122 (DCHVVKFAFKDHNLPGTLPQIVKL) and 123 to 146 (PYLREIDLAYNYINGTLPREWASS). Residues asparagine 136, asparagine 147, and asparagine 168 are each glycosylated (N-linked (GlcNAc...) asparagine). LRR repeat units lie at residues 148-168 (LTFISLLVNRLSGEIPKEFGN), 169-192 (SSLTYLDLESNAFSGTIPQELGNL), 193-216 (VHLKKLLLSSNKLTGTLPASLARL), 218-240 (NMTDFRINDLQLSGTIPSYIQNW), and 241-266 (KQLERLEMIASGLTGPIPSVISVLSN). Residue asparagine 218 is glycosylated (N-linked (GlcNAc...) asparagine). 2 N-linked (GlcNAc...) asparagine glycosylation sites follow: asparagine 287 and asparagine 300. LRR repeat units follow at residues 288–312 (VTGLTKIILKNCNISGQIPTYLSHL), 313–336 (KELETLDLSFNKLVGGIPSFAQAE), 338–359 (LRFIILAGNMLEGDAPDELLRD), and 361–381 (ITVDLSYNNLKWQSPESRACR). N-linked (GlcNAc...) asparagine glycans are attached at residues asparagine 486 and asparagine 512. A helical membrane pass occupies residues 626-646 (IAIGIGAPCLIIFILGFLWIC). Over 647–1021 (GCLPRCGRQR…QERKKEESRP (375 aa)) the chain is Cytoplasmic. Threonine 670 is subject to Phosphothreonine. Positions 681–956 (FNPTNKIGEG…EVVAMLEGLY (276 aa)) constitute a Protein kinase domain. ATP is bound by residues 687-695 (IGEGGFGAV) and lysine 709. Position 754 is a phosphotyrosine (tyrosine 754). Aspartate 807 functions as the Proton acceptor in the catalytic mechanism. Phosphoserine is present on serine 840. Phosphothreonine is present on residues threonine 841 and threonine 846. Tyrosine 854 bears the Phosphotyrosine mark. The segment at 985 to 1021 (ENNSKTQCSVKSYPSSSSTSSGAGQAVQERKKEESRP) is disordered. The segment covering 993-1005 (SVKSYPSSSSTSS) has biased composition (low complexity). Residues 1012–1021 (QERKKEESRP) show a composition bias toward basic and acidic residues.

Belongs to the protein kinase superfamily. Ser/Thr protein kinase family. Mostly expressed in flower buds, especially in stamens.

Its subcellular location is the membrane. It catalyses the reaction L-seryl-[protein] + ATP = O-phospho-L-seryl-[protein] + ADP + H(+). The enzyme catalyses L-threonyl-[protein] + ATP = O-phospho-L-threonyl-[protein] + ADP + H(+). The polypeptide is Probable LRR receptor-like serine/threonine-protein kinase RFK1 (RKF1) (Arabidopsis thaliana (Mouse-ear cress)).